We begin with the raw amino-acid sequence, 225 residues long: Small ribosomal subunit protein uS5 (225 aa).

The region spanning 57 to 120 (LEEQVLDVKL…AQAKLSLIKV (64 aa)) is the S5 DRBM domain.

The protein belongs to the universal ribosomal protein uS5 family. In terms of assembly, part of the 30S ribosomal subunit. Contacts protein S4.

Functionally, with S4 and S12 plays an important role in translational accuracy. This is Small ribosomal subunit protein uS5 from Methanococcus vannielii (strain ATCC 35089 / DSM 1224 / JCM 13029 / OCM 148 / SB).